The chain runs to 216 residues: Peptide methionine sulfoxide reductase MsrA (216 aa).

C58 is an active-site residue.

The protein belongs to the MsrA Met sulfoxide reductase family.

The enzyme catalyses L-methionyl-[protein] + [thioredoxin]-disulfide + H2O = L-methionyl-(S)-S-oxide-[protein] + [thioredoxin]-dithiol. It carries out the reaction [thioredoxin]-disulfide + L-methionine + H2O = L-methionine (S)-S-oxide + [thioredoxin]-dithiol. Functionally, has an important function as a repair enzyme for proteins that have been inactivated by oxidation. Catalyzes the reversible oxidation-reduction of methionine sulfoxide in proteins to methionine. The chain is Peptide methionine sulfoxide reductase MsrA from Azotobacter vinelandii (strain DJ / ATCC BAA-1303).